A 216-amino-acid chain; its full sequence is MGRKPSPRAQELPEEEARTCCGCRFPLLLALLQLALGIAVTVLGFLMASISPSLLVRDTPFWAGSIVCVVAYLGLFMLCVSYQVDERTCVQFSMKVFYFLLSALGLMVCMLAVAFAAHHYSLLAQFTCETSLDSCQCKLPSSEPLSRAFVYRDVTDCTSVTGTFKLFLIIQMVLNLVCGLVCLLACFVMWKHRYQVFYVGVGLRSLMASDGQLPKA.

Topologically, residues 1 to 26 are cytoplasmic; that stretch reads MGRKPSPRAQELPEEEARTCCGCRFP. A helical transmembrane segment spans residues 27-47; sequence LLLALLQLALGIAVTVLGFLM. Residues 48-59 lie on the Extracellular side of the membrane; the sequence is ASISPSLLVRDT. The chain crosses the membrane as a helical span at residues 60–80; that stretch reads PFWAGSIVCVVAYLGLFMLCV. Topologically, residues 81–95 are cytoplasmic; sequence SYQVDERTCVQFSMK. A helical transmembrane segment spans residues 96–116; the sequence is VFYFLLSALGLMVCMLAVAFA. Topologically, residues 117–166 are extracellular; the sequence is AHHYSLLAQFTCETSLDSCQCKLPSSEPLSRAFVYRDVTDCTSVTGTFKL. A helical membrane pass occupies residues 167-187; that stretch reads FLIIQMVLNLVCGLVCLLACF. Topologically, residues 188 to 216 are cytoplasmic; it reads VMWKHRYQVFYVGVGLRSLMASDGQLPKA.

Its subcellular location is the cell membrane. It is found in the sarcolemma. It localises to the postsynaptic cell membrane. In terms of biological role, component of the dystrophin-glycoprotein complex (DGC), a complex that spans the muscle plasma membrane and forms a link between the F-actin cytoskeleton and the extracellular matrix. Preferentially associates with the sarcoglycan subcomplex of the DGC. This is Sarcospan (Sspn) from Mus musculus (Mouse).